We begin with the raw amino-acid sequence, 350 residues long: Probable poly-beta-1,6-N-acetyl-D-glucosamine export protein (350 aa).

The next 10 helical transmembrane spans lie at 7–29 (ELVY…TQIT), 44–66 (FYIR…LLTT), 79–101 (TRVK…SESL), 116–138 (LLGQ…SYII), 145–167 (LFNS…YYFT), 187–204 (IIFG…MGYN), 211–233 (FLER…FIAL), 243–262 (SFSY…ILGI), 269–291 (ILFN…HPII), and 306–328 (TMVF…GMIL).

Belongs to the acyltransferase 3 family.

The protein resides in the cell membrane. Presumably involved in the export of the biofilm adhesin polysaccharide poly-beta-1,6-N-acetyl-D-glucosamine (PNAG, also referred to as PIA) across the cell membrane. This is Probable poly-beta-1,6-N-acetyl-D-glucosamine export protein (icaC) from Staphylococcus aureus (strain Mu50 / ATCC 700699).